The following is a 271-amino-acid chain: Short-chain dehydrogenase/reductase SAT3 (271 aa).

3 residues coordinate NADP(+): S17, D40, and N67. S153 (proton donor) is an active-site residue. NADP(+) contacts are provided by Y168, K172, and S203. Catalysis depends on Y168, which acts as the Proton acceptor. Residue K172 is the Lowers pKa of active site Tyr of the active site.

This sequence belongs to the short-chain dehydrogenases/reductases (SDR) family.

It participates in mycotoxin biosynthesis. Its function is as follows. Short-chain dehydrogenase/reductase; part of the satratoxin SC1 cluster involved in the biosynthesis of satratoxins, trichothecene mycotoxins that are associated with human food poisonings. Satratoxins are suggested to be made by products of multiple gene clusters (SC1, SC2 and SC3) that encode 21 proteins in all, including polyketide synthases, acetyltransferases, and other enzymes expected to modify the trichothecene skeleton. SC1 encodes 10 proteins, SAT1 to SAT10. The largest are SAT8, which encodes a putative polyketide synthase (PKS) with a conventional non-reducing architecture, and SAT10, a putative protein containing four ankyrin repeats and thus may be involved in protein scaffolding. The putative short-chain reductase SAT3 may assist the PKS in some capacity. SAT6 contains a secretory lipase domain and acts probably as a trichothecene esterase. SAT5 encodes a putative acetyltransferase, and so, with SAT6, may affect endogenous protection from toxicity. The probable transcription factor SAT9 may regulate the expression of the SC1 cluster. SC2 encodes proteins SAT11 to SAT16, the largest of which encodes the putative reducing PKS SAT13. SAT11 is a cytochrome P450 monooxygenase, while SAT14 and SAT16 are probable acetyltransferases. The SC2 cluster may be regulated by the transcription factor SAT15. SC3 is a small cluster that encodes 5 proteins, SAT17 to SAT21. SAT21 is a putative MFS-type transporter which may have a role in exporting secondary metabolites. The four other proteins putatively encoded in SC3 include the taurine hydroxylase-like protein SAT17, the O-methyltransferase SAT18, the acetyltransferase SAT19, and the Cys6-type zinc finger SAT20, the latter being probably involved in regulation of SC3 expression. The chain is Short-chain dehydrogenase/reductase SAT3 from Stachybotrys chartarum (strain CBS 109288 / IBT 7711) (Toxic black mold).